The sequence spans 111 residues: Putative membrane protein insertion efficiency factor (111 aa).

Belongs to the UPF0161 family.

The protein resides in the cell inner membrane. In terms of biological role, could be involved in insertion of integral membrane proteins into the membrane. The sequence is that of Putative membrane protein insertion efficiency factor from Methylobacterium nodulans (strain LMG 21967 / CNCM I-2342 / ORS 2060).